The sequence spans 367 residues: Carbamoyl phosphate synthase small chain (367 aa).

The interval 1-182 is CPSase; the sequence is MKLENKKGYL…PIFHPNTGDM (182 aa). Residues Ser-50, Gly-230, and Gly-232 each contribute to the L-glutamine site. The region spanning 182-367 is the Glutamine amidotransferase type-1 domain; it reads MIVVVDCGIK…DKFRTMVTGK (186 aa). Cys-258 functions as the Nucleophile in the catalytic mechanism. Leu-259, Gln-262, Asn-300, Gly-302, and Tyr-303 together coordinate L-glutamine. Active-site residues include His-343 and Glu-345.

The protein belongs to the CarA family. In terms of assembly, composed of two chains; the small (or glutamine) chain promotes the hydrolysis of glutamine to ammonia, which is used by the large (or ammonia) chain to synthesize carbamoyl phosphate. Tetramer of heterodimers (alpha,beta)4.

The enzyme catalyses hydrogencarbonate + L-glutamine + 2 ATP + H2O = carbamoyl phosphate + L-glutamate + 2 ADP + phosphate + 2 H(+). The catalysed reaction is L-glutamine + H2O = L-glutamate + NH4(+). It functions in the pathway amino-acid biosynthesis; L-arginine biosynthesis; carbamoyl phosphate from bicarbonate: step 1/1. The protein operates within pyrimidine metabolism; UMP biosynthesis via de novo pathway; (S)-dihydroorotate from bicarbonate: step 1/3. Small subunit of the glutamine-dependent carbamoyl phosphate synthetase (CPSase). CPSase catalyzes the formation of carbamoyl phosphate from the ammonia moiety of glutamine, carbonate, and phosphate donated by ATP, constituting the first step of 2 biosynthetic pathways, one leading to arginine and/or urea and the other to pyrimidine nucleotides. The small subunit (glutamine amidotransferase) binds and cleaves glutamine to supply the large subunit with the substrate ammonia. In Saccharolobus solfataricus (strain ATCC 35092 / DSM 1617 / JCM 11322 / P2) (Sulfolobus solfataricus), this protein is Carbamoyl phosphate synthase small chain.